Reading from the N-terminus, the 127-residue chain is Holo-[acyl-carrier-protein] synthase (127 aa).

Positions 7 and 53 each coordinate Mg(2+).

The protein belongs to the P-Pant transferase superfamily. AcpS family. The cofactor is Mg(2+).

It localises to the cytoplasm. The catalysed reaction is apo-[ACP] + CoA = holo-[ACP] + adenosine 3',5'-bisphosphate + H(+). Transfers the 4'-phosphopantetheine moiety from coenzyme A to a Ser of acyl-carrier-protein. The sequence is that of Holo-[acyl-carrier-protein] synthase from Herpetosiphon aurantiacus (strain ATCC 23779 / DSM 785 / 114-95).